The following is a 31-amino-acid chain: Hemocyanin subunit 2 (31 aa).

The protein belongs to the tyrosinase family. Hemocyanin subfamily. Hemolymph.

Its subcellular location is the secreted. The protein localises to the extracellular space. Functionally, hemocyanins are copper-containing oxygen carriers occurring freely dissolved in the hemolymph of many mollusks and arthropods. In Maja squinado (Mediterranean spider crab), this protein is Hemocyanin subunit 2.